Here is an 85-residue protein sequence, read N- to C-terminus: Cell division protein ZapA (85 aa).

Residues 60–85 are a coiled coil; sequence AVNVVHDYLKLKEQYEKLEIQLKEKE.

This sequence belongs to the ZapA family. Type 2 subfamily. As to quaternary structure, homodimer. Interacts with FtsZ.

It localises to the cytoplasm. Activator of cell division through the inhibition of FtsZ GTPase activity, therefore promoting FtsZ assembly into bundles of protofilaments necessary for the formation of the division Z ring. It is recruited early at mid-cell but it is not essential for cell division. This Bacillus pumilus (strain SAFR-032) protein is Cell division protein ZapA.